We begin with the raw amino-acid sequence, 332 residues long: 2,3-diketo-L-gulonate reductase (332 aa).

H44 (proton donor) is an active-site residue. Residues 168–174 (ITMVDMS), 224–225 (WK), and 304–306 (GHE) contribute to the NAD(+) site.

This sequence belongs to the LDH2/MDH2 oxidoreductase family. DlgD subfamily. Homodimer.

The protein localises to the cytoplasm. The enzyme catalyses 3-dehydro-L-gulonate + NAD(+) = 2,3-dioxo-L-gulonate + NADH + H(+). It catalyses the reaction 3-dehydro-L-gulonate + NADP(+) = 2,3-dioxo-L-gulonate + NADPH + H(+). In terms of biological role, catalyzes the reduction of 2,3-diketo-L-gulonate in the presence of NADH, to form 3-keto-L-gulonate. This chain is 2,3-diketo-L-gulonate reductase, found in Escherichia coli (strain SMS-3-5 / SECEC).